Here is a 130-residue protein sequence, read N- to C-terminus: Protein ApaG (130 aa).

Positions 3 to 127 (RAVTRGIEVS…FSLDIPEQRR (125 aa)) constitute an ApaG domain.

The polypeptide is Protein ApaG (Brucella anthropi (strain ATCC 49188 / DSM 6882 / CCUG 24695 / JCM 21032 / LMG 3331 / NBRC 15819 / NCTC 12168 / Alc 37) (Ochrobactrum anthropi)).